The primary structure comprises 439 residues: Proline--tRNA ligase (439 aa).

Belongs to the class-II aminoacyl-tRNA synthetase family. ProS type 2 subfamily. Homodimer.

It localises to the cytoplasm. The enzyme catalyses tRNA(Pro) + L-proline + ATP = L-prolyl-tRNA(Pro) + AMP + diphosphate. Its function is as follows. Catalyzes the attachment of proline to tRNA(Pro) in a two-step reaction: proline is first activated by ATP to form Pro-AMP and then transferred to the acceptor end of tRNA(Pro). The chain is Proline--tRNA ligase from Rhodopseudomonas palustris (strain BisB5).